The sequence spans 62 residues: Phycobilisome degradation protein NblA homolog 1 (62 aa).

It to Synechococcus PCC 7942 NblA and some, to chloroplast ycf18.

The protein is Phycobilisome degradation protein NblA homolog 1 of Synechocystis sp. (strain ATCC 27184 / PCC 6803 / Kazusa).